A 460-amino-acid polypeptide reads, in one-letter code: MKLWGGRFESGPGEVFERFSGSLDFDRRLIDCDIRGSQAFARALENVGILTATERAQIVEAFDSIRAESLSPAFYEGATDEDVHTLVIRKLKERAGAVADKIHTGRSRNEQVSLDTRMWLREESTDLQAQLFAVMGRLLDLAEMYPHAIIPGYTHMRRAQAVLWPHYLLAYFEMFLRDWHRFGDARRRANVLPLGSGALAGSGFPLDREAMAQNLGFEGITQNSMDVSGDRDFALDFLYACTVTMIHLSRLAEDWILYSSEEFGWLELGDGVTSGSSLMPQKKNPDSLELIRGKSGRVVGCLTSLLVTMKGLPMTYNRDMQEDKIPIFDAADQLSGSLLMTSAVIESTRLNPARPAAAAEESWVVATDLAEALARAGTPFHQAHQIVGRFVLESVRANKKPSDWTAEEMHAFAPEFTPDFAALLNPAEGMKSREIPGGTGTAAVAAALAHARQLLGKLIV.

This sequence belongs to the lyase 1 family. Argininosuccinate lyase subfamily.

The protein resides in the cytoplasm. It catalyses the reaction 2-(N(omega)-L-arginino)succinate = fumarate + L-arginine. It functions in the pathway amino-acid biosynthesis; L-arginine biosynthesis; L-arginine from L-ornithine and carbamoyl phosphate: step 3/3. This chain is Argininosuccinate lyase, found in Solibacter usitatus (strain Ellin6076).